A 215-amino-acid polypeptide reads, in one-letter code: Glycerol-3-phosphate acyltransferase (215 aa).

Transmembrane regions (helical) follow at residues L3–G23, T42–I61, T68–L90, A110–L130, L134–L154, and L162–I182.

The protein belongs to the PlsY family. As to quaternary structure, probably interacts with PlsX.

The protein localises to the cell membrane. The enzyme catalyses an acyl phosphate + sn-glycerol 3-phosphate = a 1-acyl-sn-glycero-3-phosphate + phosphate. It functions in the pathway lipid metabolism; phospholipid metabolism. Functionally, catalyzes the transfer of an acyl group from acyl-phosphate (acyl-PO(4)) to glycerol-3-phosphate (G3P) to form lysophosphatidic acid (LPA). This enzyme utilizes acyl-phosphate as fatty acyl donor, but not acyl-CoA or acyl-ACP. The protein is Glycerol-3-phosphate acyltransferase of Streptococcus equi subsp. zooepidemicus (strain H70).